Here is a 640-residue protein sequence, read N- to C-terminus: MRLDVEQTSKLDRVRADYNVHYWSQGFYGIDDQGEMYVSPRSDNAHQIQLSKIVKQLEERQLNVPVLVRFPQILHQRVHSICDAFNQAIEEYQYPNKYLLVYPIKVNQQREVVDEILASQAQLETKQLGLEAGSKPELLAVLAMAQHASSVIVCNGYKDREYIRLALIGEKLGHKVFIVLEKMSELDLVLREAKSLGVTPRLGIRIRLASQGAGKWQASGGEKSKFGLSASQVLNVISRLKKENQLDTLQLVHFHLGSQMANIRDVRNGVNESARFYCELRTLGANITYFDVGGGLAIDYDGTRSQSSNSMNYGLVEYARNIVNTVGDVCKDYKQPMPVIISESGRSLTAHHAVLISNVIGTETYKPETVTEPEEDFPLLLNNMWRSWLNLHNGTDARALIEIYNDTQSDLAEVHSQFATGVLTLEHRAWAEQTSLRIYYELNRLMSTKNRFHRPILDELSERLADKFFVNFSLFQSLPDSWGIDQVFPVLPLSGLQNAADRRAVMLDITCDSDGAIDAYVDGQGIESTLPVPAWNEDEPYLMGFFLVGAYQEILGDMHNLFGDTHSVVVNVGDQGEINIDFINEGDTVEDMMRYVHIDVDQIRKNYHSLVSQRVDQEEQQQILAELEQGLSGYTYLEDF.

N6-(pyridoxal phosphate)lysine is present on Lys-105. Residue 290–300 (FDVGGGLAIDY) participates in substrate binding.

It belongs to the Orn/Lys/Arg decarboxylase class-II family. SpeA subfamily. Mg(2+) is required as a cofactor. It depends on pyridoxal 5'-phosphate as a cofactor.

The catalysed reaction is L-arginine + H(+) = agmatine + CO2. Functionally, catalyzes the biosynthesis of agmatine from arginine. This Vibrio vulnificus (strain CMCP6) protein is Biosynthetic arginine decarboxylase.